Here is a 196-residue protein sequence, read N- to C-terminus: ATP-dependent Clp protease proteolytic subunit (196 aa).

The active-site Nucleophile is the serine 96. The active site involves histidine 121.

Belongs to the peptidase S14 family. Fourteen ClpP subunits assemble into 2 heptameric rings which stack back to back to give a disk-like structure with a central cavity, resembling the structure of eukaryotic proteasomes.

It is found in the cytoplasm. The enzyme catalyses Hydrolysis of proteins to small peptides in the presence of ATP and magnesium. alpha-casein is the usual test substrate. In the absence of ATP, only oligopeptides shorter than five residues are hydrolyzed (such as succinyl-Leu-Tyr-|-NHMec, and Leu-Tyr-Leu-|-Tyr-Trp, in which cleavage of the -Tyr-|-Leu- and -Tyr-|-Trp bonds also occurs).. Its function is as follows. Cleaves peptides in various proteins in a process that requires ATP hydrolysis. Has a chymotrypsin-like activity. Plays a major role in the degradation of misfolded proteins. The chain is ATP-dependent Clp protease proteolytic subunit from Streptococcus pneumoniae (strain ATCC 700669 / Spain 23F-1).